Reading from the N-terminus, the 311-residue chain is Putative UPF0607 protein ENSP00000382826 (311 aa).

Positions 48-61 are enriched in basic and acidic residues; that stretch reads AEEPKEATEVKDQV. Disordered stretches follow at residues 48–99, 186–229, and 291–311; these read AEEP…WYNP, GLLM…PLQL, and RKQL…GSCL. Residues 78 to 97 show a composition bias toward polar residues; that stretch reads EAASTSRPLETQGNLTSSWY. 2 stretches are compositionally biased toward basic residues: residues 213 to 222 and 291 to 305; these read AGHRSRKRKL and RKQL…RQGR.

Belongs to the UPF0607 family.

The polypeptide is Putative UPF0607 protein ENSP00000382826 (Homo sapiens (Human)).